The sequence spans 159 residues: MNVTTTRFGEIAVEEAKIITLPDGMLGFSEKRFVLLTPQNITPFCWLQSVENPELAFVVVDTKECASDYAVKLTAEESEKLCVNDGDEVVLLAVVTMASDPFNITVNLQGPIALNPKRMLAKQIVLEGSRYTTKHPFFDQAARSKAPGKRNASGEVTAA.

The protein belongs to the FliW family. Interacts with translational regulator CsrA and flagellin(s).

The protein localises to the cytoplasm. Functionally, acts as an anti-CsrA protein, binds CsrA and prevents it from repressing translation of its target genes, one of which is flagellin. Binds to flagellin and participates in the assembly of the flagellum. This Geobacter sulfurreducens (strain ATCC 51573 / DSM 12127 / PCA) protein is Flagellar assembly factor FliW.